Here is a 1153-residue protein sequence, read N- to C-terminus: PPi-type phosphoenolpyruvate carboxykinase 3 (1153 aa).

Positions 1085–1131 (RQKLEVAKLNKDLAYLNKTIAEKPRLAETLNKQIAAVKEELQYVSSE) form a coiled coil.

The protein belongs to the PPi-type phosphoenolpyruvate carboxykinase family. As to quaternary structure, monomer and trimer; forms heterotrimers with PEPCK1 and PEPCK2.

Its subcellular location is the cytoplasm. It localises to the cytosol. It carries out the reaction oxaloacetate + diphosphate = phosphoenolpyruvate + phosphate + CO2. Inorganic pyrophosphate (PPi)-dependent phosphoenolpyruvate carboxykinase, which regulates the carbon flow of the central metabolism by fixing CO(2) to phosphoenolpyruvate to produce oxaloacetate. Can also produce pyruvate and diphosphate from phosphoenolpyruvate and phosphate. The sequence is that of PPi-type phosphoenolpyruvate carboxykinase 3 from Entamoeba histolytica (strain ATCC 30459 / HM-1:IMSS / ABRM).